A 261-amino-acid polypeptide reads, in one-letter code: Src-like-adapter 2 (261 aa).

Over residues 1–10 (MGSLPSRRKS) the composition is skewed to basic residues. The segment at 1–31 (MGSLPSRRKSLPSPSLSSSVQGQGPVTMEAE) is disordered. G2 carries N-myristoyl glycine lipidation. Residues 32-92 (RSKATAVALG…PSVHVAKVSH (61 aa)) form the SH3 domain. One can recognise an SH2 domain in the interval 94–191 (WLYEGLSREK…DICCLLKEPC (98 aa)). An SLA C-terminal region spans residues 195–261 (RAGPLPGKDI…NDEAVSLDDA (67 aa)).

In terms of assembly, interacts (via SH2 domain) with ZAP70 (phosphorylated) and CD3Z (phosphorylated). Interacts (via SH2 domain) with CSF1R (phosphorylated). Interacts (via its C-terminal domain) with CBL (phosphorylated). Phosphorylated by CSF1R. Predominantly expressed in immune system, with highest levels in peripheral blood leukocytes. Expressed in spleen, thymus and lymph nodes. Expressed in T-cells as well as in monocytes, and at low level in B-cells. Also detected in placenta, prostate, skin, retina and colon.

Its subcellular location is the cytoplasm. It localises to the cell membrane. It is found in the cytoplasmic vesicle. Its function is as follows. Adapter protein, which negatively regulates T-cell receptor (TCR) signaling. Inhibits T-cell antigen-receptor induced activation of nuclear factor of activated T-cells. May act by linking signaling proteins such as ZAP70 with CBL, leading to a CBL dependent degradation of signaling proteins. This is Src-like-adapter 2 (SLA2) from Homo sapiens (Human).